A 282-amino-acid chain; its full sequence is Reaction center protein L chain (282 aa).

Over 2 to 32 (ALLSFERKYRVPGGTLVGGNLFDFWVGPFYV) the chain is Cytoplasmic. A helical membrane pass occupies residues 33–56 (GFFGVATFFFAALGIILIAWSAVL). Residues 57–83 (QGTWNPQLISVYPPALEYGLGGAPLAK) are Periplasmic-facing. A helical membrane pass occupies residues 84–112 (GGLWQIITICATGAFVSWALREVEICRKL). At 113–116 (GIGY) the chain is on the cytoplasmic side. A helical membrane pass occupies residues 117–139 (HIPFAFAFAILAYLTLVLFRPVM). Residues 140-171 (MGAWGYAFPYGIWTHLDWVSNTGYTYGNFHYN) are Periplasmic-facing. His-154 and His-174 together coordinate (7R,8Z)-bacteriochlorophyll b. A helical transmembrane segment spans residues 172–199 (PAHMIAISFFFTNALALALHGALVLSAA). His-191 lines the Fe cation pocket. Residues 200–225 (NPEKGKEMRTPDHEDTFFRDLVGYSI) lie on the Cytoplasmic side of the membrane. A ubiquinone is bound at residue Phe-217. Residues 226–251 (GTLGIHRLGLLLSLSAVFFSALCMII) traverse the membrane as a helical segment. His-231 is a Fe cation binding site. Residues 252 to 282 (TGTIWFDQWVDWWQWWVKLPWWANIPGGING) are Periplasmic-facing.

This sequence belongs to the reaction center PufL/M/PsbA/D family. As to quaternary structure, reaction center is composed of four bacteriochlorophylls, two bacteriopheophytins, two ubiquinones, one iron, and three highly hydrophobic polypeptide chains (designated L, M, and H).

It is found in the cellular chromatophore membrane. Its function is as follows. The reaction center is a membrane-bound complex that mediates the initial photochemical event in the electron transfer process of photosynthesis. This chain is Reaction center protein L chain (pufL), found in Cereibacter sphaeroides (strain ATCC 17023 / DSM 158 / JCM 6121 / CCUG 31486 / LMG 2827 / NBRC 12203 / NCIMB 8253 / ATH 2.4.1.) (Rhodobacter sphaeroides).